The chain runs to 405 residues: MIMQDEIQPYDLPDELGHFGPYGGIFVAETLMEPLEELKAAYHRYLKDPEFLAELDHDLNHYVGRPSPIYHAERLSRELGGAQIFFKREDLNHTGAHKVNNTVGQALLAKRMGKRRVIAETGAGQHGVATATVAARLGMECVVYMGAVDVQRQALNVFRMKLLGATVIAVDSGSRTLKDALNEAMRDWVTNVDDTFYIIGTVAGPHPYPAMVRDFQAVIGREARRQMLEMTGRLPDALVACVGGGSNAIGLFHPFVDDREVAMYGVEAAGDGIETGRHSAPLSAGRPGVLHGNRTYLMEDEDGEIIETHSISAGLDYPGVGPEHAWLKDCGRASYVSATDAEALEAFHILTRSEGIIPALESSHAVAYALKLAPTLSSDKIVLVNLSGRGDKDIHTIATREGIVL.

At K98 the chain carries N6-(pyridoxal phosphate)lysine.

This sequence belongs to the TrpB family. As to quaternary structure, tetramer of two alpha and two beta chains. It depends on pyridoxal 5'-phosphate as a cofactor.

The enzyme catalyses (1S,2R)-1-C-(indol-3-yl)glycerol 3-phosphate + L-serine = D-glyceraldehyde 3-phosphate + L-tryptophan + H2O. It functions in the pathway amino-acid biosynthesis; L-tryptophan biosynthesis; L-tryptophan from chorismate: step 5/5. Its function is as follows. The beta subunit is responsible for the synthesis of L-tryptophan from indole and L-serine. In Methylococcus capsulatus (strain ATCC 33009 / NCIMB 11132 / Bath), this protein is Tryptophan synthase beta chain.